A 990-amino-acid polypeptide reads, in one-letter code: Tyrosine-protein phosphatase 3 (990 aa).

Disordered stretches follow at residues Gln47–Val88, Asn100–Glu193, Pro246–Gln414, and Lys431–Leu452. Composition is skewed to low complexity over residues Asn52–Val88 and Asn100–Asn117. Positions Leu127–Lys136 are enriched in polar residues. 5 stretches are compositionally biased toward low complexity: residues Asn137–Asn191, Ser250–Leu271, Asn278–Asn293, Gln310–Gln327, and Asn334–Ser413. One can recognise a Tyrosine-protein phosphatase domain in the interval Met422–Val715. Residues Lys437–Tyr447 are compositionally biased toward basic residues. The active-site Phosphocysteine intermediate is the Cys650. The span at Pro786–Phe795 shows a compositional bias: polar residues. Disordered regions lie at residues Pro786 to Ile814 and Leu834 to Phe990. Low complexity-rich tracts occupy residues Ser796 to Pro806 and Leu834 to Pro850. Over residues Leu851–Ser868 the composition is skewed to polar residues. 2 stretches are compositionally biased toward low complexity: residues Asn878–Gly916 and Gly924–Asn968.

It belongs to the protein-tyrosine phosphatase family. Non-receptor class subfamily. In terms of tissue distribution, in the anterior-like and prestalk cell types.

It is found in the cytoplasm. It carries out the reaction O-phospho-L-tyrosyl-[protein] + H2O = L-tyrosyl-[protein] + phosphate. In terms of biological role, seems to dephosphorylate a protein of 130 kDa (p130). This is Tyrosine-protein phosphatase 3 (ptpC) from Dictyostelium discoideum (Social amoeba).